The sequence spans 124 residues: MPTINQLVRKERKKVIKKSKSPALVKCPQRRGVCTRVYTTTPKKPNSALRKVAKVRLTSGYEVISYIPGEGHNLQEHSIVLVRGGRVKDLPGVKYHIIRGALDTAGVANRKKSRSKYGTKKPKS.

Position 89 is a 3-methylthioaspartic acid (D89).

It belongs to the universal ribosomal protein uS12 family. In terms of assembly, part of the 30S ribosomal subunit. Contacts proteins S8 and S17. May interact with IF1 in the 30S initiation complex.

Functionally, with S4 and S5 plays an important role in translational accuracy. Interacts with and stabilizes bases of the 16S rRNA that are involved in tRNA selection in the A site and with the mRNA backbone. Located at the interface of the 30S and 50S subunits, it traverses the body of the 30S subunit contacting proteins on the other side and probably holding the rRNA structure together. The combined cluster of proteins S8, S12 and S17 appears to hold together the shoulder and platform of the 30S subunit. The polypeptide is Small ribosomal subunit protein uS12 (Nitratiruptor sp. (strain SB155-2)).